Reading from the N-terminus, the 321-residue chain is Glucokinase (321 aa).

8 to 13 (GDVGGT) is a binding site for ATP.

It belongs to the bacterial glucokinase family.

It is found in the cytoplasm. The catalysed reaction is D-glucose + ATP = D-glucose 6-phosphate + ADP + H(+). In Shigella boydii serotype 18 (strain CDC 3083-94 / BS512), this protein is Glucokinase.